A 266-amino-acid polypeptide reads, in one-letter code: Glucosamine-6-phosphate deaminase (266 aa).

The active-site Proton acceptor; for enolization step is the D72. D141 functions as the For ring-opening step in the catalytic mechanism. H143 functions as the Proton acceptor; for ring-opening step in the catalytic mechanism. The active-site For ring-opening step is the E148.

The protein belongs to the glucosamine/galactosamine-6-phosphate isomerase family. NagB subfamily. As to quaternary structure, homohexamer.

It carries out the reaction alpha-D-glucosamine 6-phosphate + H2O = beta-D-fructose 6-phosphate + NH4(+). Its pathway is amino-sugar metabolism; N-acetylneuraminate degradation; D-fructose 6-phosphate from N-acetylneuraminate: step 5/5. Allosterically activated by N-acetylglucosamine 6-phosphate (GlcNAc6P). In terms of biological role, catalyzes the reversible isomerization-deamination of glucosamine 6-phosphate (GlcN6P) to form fructose 6-phosphate (Fru6P) and ammonium ion. This chain is Glucosamine-6-phosphate deaminase, found in Yersinia pseudotuberculosis serotype O:1b (strain IP 31758).